Reading from the N-terminus, the 65-residue chain is Muscarinic m1-toxin2 (65 aa).

Disulfide bonds link C3–C24, C17–C42, C46–C57, and C58–C63.

It belongs to the three-finger toxin family. Short-chain subfamily. Aminergic toxin sub-subfamily. In terms of assembly, monomer. As to expression, expressed by the venom gland.

It is found in the secreted. Functionally, binds irreversibly and specifically to M1 (CHRM1) muscarinic acetylcholine receptors, blocking further binding of antagonists and preventing the action of agonists. This is Muscarinic m1-toxin2 from Dendroaspis angusticeps (Eastern green mamba).